A 159-amino-acid chain; its full sequence is Phosphopantetheine adenylyltransferase (159 aa).

A substrate-binding site is contributed by Thr-10. ATP contacts are provided by residues 10 to 11 (TF) and His-18. Residues Lys-42, Met-74, and Arg-88 each contribute to the substrate site. ATP-binding positions include 89–91 (GLR), Glu-99, and 124–130 (WSFISSS).

It belongs to the bacterial CoaD family. As to quaternary structure, homohexamer. Requires Mg(2+) as cofactor.

The protein localises to the cytoplasm. It catalyses the reaction (R)-4'-phosphopantetheine + ATP + H(+) = 3'-dephospho-CoA + diphosphate. Its pathway is cofactor biosynthesis; coenzyme A biosynthesis; CoA from (R)-pantothenate: step 4/5. Functionally, reversibly transfers an adenylyl group from ATP to 4'-phosphopantetheine, yielding dephospho-CoA (dPCoA) and pyrophosphate. In Escherichia fergusonii (strain ATCC 35469 / DSM 13698 / CCUG 18766 / IAM 14443 / JCM 21226 / LMG 7866 / NBRC 102419 / NCTC 12128 / CDC 0568-73), this protein is Phosphopantetheine adenylyltransferase.